We begin with the raw amino-acid sequence, 666 residues long: tRNA 5-methylaminomethyl-2-thiouridine biosynthesis bifunctional protein MnmC (666 aa).

The segment at 1–253 is tRNA (mnm(5)s(2)U34)-methyltransferase; it reads MSSPFVPIIT…KRHMICAHYE (253 aa). The segment at 283 to 666 is FAD-dependent cmnm(5)s(2)U34 oxidoreductase; that stretch reads VGGGLAGCFI…FLRKKIIQGP (384 aa).

It in the N-terminal section; belongs to the methyltransferase superfamily. tRNA (mnm(5)s(2)U34)-methyltransferase family. In the C-terminal section; belongs to the DAO family. The cofactor is FAD.

The protein resides in the cytoplasm. It catalyses the reaction 5-aminomethyl-2-thiouridine(34) in tRNA + S-adenosyl-L-methionine = 5-methylaminomethyl-2-thiouridine(34) in tRNA + S-adenosyl-L-homocysteine + H(+). In terms of biological role, catalyzes the last two steps in the biosynthesis of 5-methylaminomethyl-2-thiouridine (mnm(5)s(2)U) at the wobble position (U34) in tRNA. Catalyzes the FAD-dependent demodification of cmnm(5)s(2)U34 to nm(5)s(2)U34, followed by the transfer of a methyl group from S-adenosyl-L-methionine to nm(5)s(2)U34, to form mnm(5)s(2)U34. The polypeptide is tRNA 5-methylaminomethyl-2-thiouridine biosynthesis bifunctional protein MnmC (Legionella pneumophila (strain Lens)).